The chain runs to 428 residues: MLYLLLTTTLLMMTWNRYAGRIAFLSLLGYFVIMLNIWLHFGSLSESVTLLFGGGLVRLDESILSALLFILFLGLVIMNRTGDLGWEFHLLLMGGLTGAIYMLTAYDLLLMVVGFEFLNLSTYLILSLYRGTETATLKYLLSSAFYTTLLLLAISFFYGLTGSTGYDALFVQMNYLGGETFLPQILLLGTIAFKLGLVPAHLWVPDVYDGLPMTLLSWMGSVPKAAVLLWLPTIYPLLNQLAPFLLVLSALSFLLSAVLMAAQYKMKRFLAYSAIGHLGFVVAAFAIGDYHAYGYYIFIYMIATLAQFVLLSELPQTELMKQTSVLKDHRALGLGFLVIVLTMASLPPFAGFYAKLLVLFGFLEIGYGIFAVLLILASLRSAAYYLKWIQTTFFSVVPFASAPIQVQYPNLVSFLVTLILPSTLLLLL.

14 helical membrane-spanning segments follow: residues 22–42 (IAFLSLLGYFVIMLNIWLHFG), 59–79 (LDESILSALLFILFLGLVIMN), 84–104 (LGWEFHLLLMGGLTGAIYMLT), 108–128 (LLLMVVGFEFLNLSTYLILSL), 140–160 (LLSSAFYTTLLLLAISFFYGL), 185–205 (ILLLGTIAFKLGLVPAHLWVP), 218–238 (WMGSVPKAAVLLWLPTIYPLL), 241–261 (LAPFLLVLSALSFLLSAVLMA), 269–289 (FLAYSAIGHLGFVVAAFAIGD), 292–312 (AYGYYIFIYMIATLAQFVLLS), 332–352 (LGLGFLVIVLTMASLPPFAGF), 356–376 (LLVLFGFLEIGYGIFAVLLIL), 384–404 (YYLKWIQTTFFSVVPFASAPI), and 408–428 (YPNLVSFLVTLILPSTLLLLL).

Belongs to the complex I subunit 2 family.

The protein localises to the mitochondrion inner membrane. It catalyses the reaction a ubiquinone + NADH + 5 H(+)(in) = a ubiquinol + NAD(+) + 4 H(+)(out). Its function is as follows. Core subunit of the mitochondrial membrane respiratory chain NADH dehydrogenase (Complex I) that is believed to belong to the minimal assembly required for catalysis. Complex I functions in the transfer of electrons from NADH to the respiratory chain. The immediate electron acceptor for the enzyme is believed to be ubiquinone. This Hyaloraphidium curvatum (Lower fungus) protein is NADH-ubiquinone oxidoreductase chain 2.